Reading from the N-terminus, the 741-residue chain is Eukaryotic translation initiation factor 3 subunit B (741 aa).

Positions 1-10 are enriched in polar residues; the sequence is MAPSFDTLSE. The interval 1 to 22 is disordered; it reads MAPSFDTLSEQDLHEEEEEEID. The span at 13 to 22 shows a compositional bias: acidic residues; it reads LHEEEEEEID. Residues 40–126 enclose the RRM domain; it reads TFVVIDGLPV…HTLLVNKLMD (87 aa). 5 WD repeats span residues 193–230, 232–289, 303–344, 514–557, and 572–610; these read AHWT…KQKQ, PHPF…RSFV, QPKK…LLGK, IEKK…EKPE, and LEHY…HTFS. The disordered stretch occupies residues 695–722; it reads KDAYGLPEDVDDPKKAKDAPAVTSEQGE.

This sequence belongs to the eIF-3 subunit B family. As to quaternary structure, component of the eukaryotic translation initiation factor 3 (eIF-3) complex.

The protein localises to the cytoplasm. Functionally, RNA-binding component of the eukaryotic translation initiation factor 3 (eIF-3) complex, which is involved in protein synthesis of a specialized repertoire of mRNAs and, together with other initiation factors, stimulates binding of mRNA and methionyl-tRNAi to the 40S ribosome. The eIF-3 complex specifically targets and initiates translation of a subset of mRNAs involved in cell proliferation. The protein is Eukaryotic translation initiation factor 3 subunit B (prt1) of Aspergillus clavatus (strain ATCC 1007 / CBS 513.65 / DSM 816 / NCTC 3887 / NRRL 1 / QM 1276 / 107).